Consider the following 254-residue polypeptide: MEIDLNADLGEGCGSDEALLDLVTSANIACGWHAGGANAMRDCVRWAVQKGVSIGAHPSFHDPENFGRKEMQLPPGDIYAGVLYQLGALSAIAQAEGGRIAHVKPHGALYNQAARDPTIADAVVSAIHDFDPSLSVFGLANSVFVAAARHAGLVAIEEVFADRGYRADGTLVPRSQPGALIDDEDAVLARTLDMVRERQVRAVTGEWVPLNAQTVCLHGDGPHALAFAKRIRAALETAGIDVIAPGALQAGEDA.

It belongs to the LamB/PxpA family. In terms of assembly, forms a complex composed of PxpA, PxpB and PxpC.

The enzyme catalyses 5-oxo-L-proline + ATP + 2 H2O = L-glutamate + ADP + phosphate + H(+). Its function is as follows. Catalyzes the cleavage of 5-oxoproline to form L-glutamate coupled to the hydrolysis of ATP to ADP and inorganic phosphate. The polypeptide is 5-oxoprolinase subunit A (Burkholderia vietnamiensis (strain G4 / LMG 22486) (Burkholderia cepacia (strain R1808))).